A 171-amino-acid chain; its full sequence is Synaptonemal complex central element protein 2 (171 aa).

The tract at residues 1–52 (MERHGVAAPPVELKDQEPPAIVESGEHRQSENHEETPGSVAPSASCQLPGPF) is disordered. Residues 24–36 (SGEHRQSENHEET) are compositionally biased toward basic and acidic residues. Coiled coils occupy residues 52-83 (FSSL…DHAL) and 118-146 (QERL…QTVE).

It belongs to the SYCE family. As to quaternary structure, homodimer. Found in a complex with SYCP1 and SYCE1. Interacts with SYCP1 and SYCE1. Interacts with SYCE3. Interacts with TEX12. As to expression, meiotic cells (at protein level). Expressed in the ovary and testis.

It localises to the nucleus. The protein localises to the chromosome. Major component of the transverse central element of synaptonemal complexes (SCS), formed between homologous chromosomes during meiotic prophase. Requires SYCP1 in order to be incorporated into the central element. May have a role in the synaptonemal complex assembly, stabilization and recombination. This chain is Synaptonemal complex central element protein 2 (Syce2), found in Mus musculus (Mouse).